The sequence spans 176 residues: MAIRLEDKKAIVAEVNETAGAALSVVLADYRGVTSGDMTALRAKARAENVRLKVVRNNLAKIAIRGTEFECIDPALVGPTILAFSMEDPGAAARLLKDFAKEKEAFEIKGLAVGGELMGAEQIDRLATLPTLHEALTKLAIVTQAPVTKLARTLNDIPGRITRVVAAVRDQKQDAA.

It belongs to the universal ribosomal protein uL10 family. Part of the ribosomal stalk of the 50S ribosomal subunit. The N-terminus interacts with L11 and the large rRNA to form the base of the stalk. The C-terminus forms an elongated spine to which L12 dimers bind in a sequential fashion forming a multimeric L10(L12)X complex.

Its function is as follows. Forms part of the ribosomal stalk, playing a central role in the interaction of the ribosome with GTP-bound translation factors. This is Large ribosomal subunit protein uL10 from Marinobacter nauticus (strain ATCC 700491 / DSM 11845 / VT8) (Marinobacter aquaeolei).